The chain runs to 201 residues: CASP-like protein 1E1 (201 aa).

At M1 to G36 the chain is on the cytoplasmic side. The helical transmembrane segment at I37–A57 threads the bilayer. Over R58 to A87 the chain is Extracellular. A helical transmembrane segment spans residues Y88–L108. The Cytoplasmic portion of the chain corresponds to S109–D127. Residues L128–A148 traverse the membrane as a helical segment. Over E149–N173 the chain is Extracellular. Residues A174 to M194 traverse the membrane as a helical segment. Residues A195 to Q201 are Cytoplasmic-facing.

This sequence belongs to the Casparian strip membrane proteins (CASP) family. Homodimer and heterodimers.

The protein localises to the cell membrane. The sequence is that of CASP-like protein 1E1 from Musa acuminata (Banana).